We begin with the raw amino-acid sequence, 464 residues long: Siroheme synthase (464 aa).

The interval 1–203 is precorrin-2 dehydrogenase /sirohydrochlorin ferrochelatase; it reads MEFLPLFHNL…GQGAEAERML (203 aa). Residues 22–23 and 43–44 contribute to the NAD(+) site; these read EI and PE. Serine 128 bears the Phosphoserine mark. The tract at residues 216–464 is uroporphyrinogen-III C-methyltransferase; that stretch reads GEVYLVGAGP…AWFEGAQATL (249 aa). Proline 225 serves as a coordination point for S-adenosyl-L-methionine. Aspartate 248 (proton acceptor) is an active-site residue. Catalysis depends on lysine 270, which acts as the Proton donor. S-adenosyl-L-methionine contacts are provided by residues 301–303, isoleucine 306, 331–332, methionine 383, and glycine 412; these read GGD and TA.

This sequence in the N-terminal section; belongs to the precorrin-2 dehydrogenase / sirohydrochlorin ferrochelatase family. It in the C-terminal section; belongs to the precorrin methyltransferase family.

The enzyme catalyses uroporphyrinogen III + 2 S-adenosyl-L-methionine = precorrin-2 + 2 S-adenosyl-L-homocysteine + H(+). It carries out the reaction precorrin-2 + NAD(+) = sirohydrochlorin + NADH + 2 H(+). The catalysed reaction is siroheme + 2 H(+) = sirohydrochlorin + Fe(2+). It functions in the pathway cofactor biosynthesis; adenosylcobalamin biosynthesis; precorrin-2 from uroporphyrinogen III: step 1/1. The protein operates within cofactor biosynthesis; adenosylcobalamin biosynthesis; sirohydrochlorin from precorrin-2: step 1/1. It participates in porphyrin-containing compound metabolism; siroheme biosynthesis; precorrin-2 from uroporphyrinogen III: step 1/1. Its pathway is porphyrin-containing compound metabolism; siroheme biosynthesis; siroheme from sirohydrochlorin: step 1/1. It functions in the pathway porphyrin-containing compound metabolism; siroheme biosynthesis; sirohydrochlorin from precorrin-2: step 1/1. Functionally, multifunctional enzyme that catalyzes the SAM-dependent methylations of uroporphyrinogen III at position C-2 and C-7 to form precorrin-2 via precorrin-1. Then it catalyzes the NAD-dependent ring dehydrogenation of precorrin-2 to yield sirohydrochlorin. Finally, it catalyzes the ferrochelation of sirohydrochlorin to yield siroheme. This Pseudomonas syringae pv. syringae (strain B728a) protein is Siroheme synthase.